We begin with the raw amino-acid sequence, 90 residues long: Probable Fe(2+)-trafficking protein (90 aa).

The protein belongs to the Fe(2+)-trafficking protein family. Monomer.

Could be a mediator in iron transactions between iron acquisition and iron-requiring processes, such as synthesis and/or repair of Fe-S clusters in biosynthetic enzymes. The sequence is that of Probable Fe(2+)-trafficking protein from Serratia proteamaculans (strain 568).